The primary structure comprises 408 residues: Aspartate aminotransferase (408 aa).

L-aspartate is bound by residues Gly-45, Trp-134, and Asn-184. The residue at position 247 (Lys-247) is an N6-(pyridoxal phosphate)lysine. Arg-382 is an L-aspartate binding site.

The protein belongs to the class-I pyridoxal-phosphate-dependent aminotransferase family. In terms of assembly, homodimer. Pyridoxal 5'-phosphate serves as cofactor.

The protein localises to the cytoplasm. It carries out the reaction L-aspartate + 2-oxoglutarate = oxaloacetate + L-glutamate. Catalyzes the reversible conversion of aspartate and 2-oxoglutarate to glutamate and oxaloacetate. Does not have prephenate aminotransferase activity. The protein is Aspartate aminotransferase of Streptomyces avermitilis (strain ATCC 31267 / DSM 46492 / JCM 5070 / NBRC 14893 / NCIMB 12804 / NRRL 8165 / MA-4680).